Here is a 279-residue protein sequence, read N- to C-terminus: NH(3)-dependent NAD(+) synthetase (279 aa).

46-53 contacts ATP; the sequence is GVSGGQDS. Asp52 lines the Mg(2+) pocket. A deamido-NAD(+)-binding site is contributed by Arg139. Thr159 lines the ATP pocket. Glu164 lines the Mg(2+) pocket. Deamido-NAD(+) contacts are provided by Lys172 and Asp179. The ATP site is built by Lys188 and Thr210. Position 259–260 (259–260) interacts with deamido-NAD(+); it reads HK.

The protein belongs to the NAD synthetase family. As to quaternary structure, homodimer.

It carries out the reaction deamido-NAD(+) + NH4(+) + ATP = AMP + diphosphate + NAD(+) + H(+). The protein operates within cofactor biosynthesis; NAD(+) biosynthesis; NAD(+) from deamido-NAD(+) (ammonia route): step 1/1. Its function is as follows. Catalyzes the ATP-dependent amidation of deamido-NAD to form NAD. Uses ammonia as a nitrogen source. The polypeptide is NH(3)-dependent NAD(+) synthetase (Leifsonia xyli subsp. xyli (strain CTCB07)).